The primary structure comprises 480 residues: tRNA (guanine(37)-N(1))-methyltransferase (480 aa).

Residues histidine 244, 292–293 (DL), 321–322 (DG), and asparagine 342 each bind S-adenosyl-L-methionine.

The protein belongs to the class I-like SAM-binding methyltransferase superfamily. TRM5/TYW2 family. In terms of assembly, monomer.

Its subcellular location is the mitochondrion matrix. It localises to the nucleus. The protein localises to the cytoplasm. It carries out the reaction guanosine(37) in tRNA + S-adenosyl-L-methionine = N(1)-methylguanosine(37) in tRNA + S-adenosyl-L-homocysteine + H(+). Functionally, specifically methylates the N1 position of guanosine-37 in various cytoplasmic and mitochondrial tRNAs. Methylation is not dependent on the nature of the nucleoside 5' of the target nucleoside. This is the first step in the biosynthesis of wybutosine (yW), a modified base adjacent to the anticodon of tRNAs and required for accurate decoding. The sequence is that of tRNA (guanine(37)-N(1))-methyltransferase from Thalassiosira pseudonana (Marine diatom).